Here is a 348-residue protein sequence, read N- to C-terminus: MRFEGSNSMTLLVDDLVSQAQERFAAASDAAALENAKARFLGKEGALTVLLKALGKLDPEQKREMGARINQAKQQIEALLNARRAALAQAELDARLASETIDVTLPGRGKAAGGIHPVIRTWERVEEIFRSIGFDVADGPEVENDWTNFTALNNPLDHPARSMQDTFYVDMHDADGLPLLLRTHTSPMQVRYARMHKPPIKVIAPGRTYRVDSGATHSPMFHQVEGLWIAEDISFADLKGVYTDFLRCFFESDDLVVRFRPSFFPFTEPSAEIDMMFTSGPNRGRWLEISGSGQVHPQVVRNFGLDPERYIGFAFGSGLERLTMLRYGVNDLRQFYEGDLRFLRQFNE.

Glutamate 268 lines the Mg(2+) pocket.

It belongs to the class-II aminoacyl-tRNA synthetase family. Phe-tRNA synthetase alpha subunit type 1 subfamily. Tetramer of two alpha and two beta subunits. It depends on Mg(2+) as a cofactor.

The protein localises to the cytoplasm. The enzyme catalyses tRNA(Phe) + L-phenylalanine + ATP = L-phenylalanyl-tRNA(Phe) + AMP + diphosphate + H(+). The polypeptide is Phenylalanine--tRNA ligase alpha subunit (Bordetella parapertussis (strain 12822 / ATCC BAA-587 / NCTC 13253)).